The sequence spans 1407 residues: DNA-directed RNA polymerase subunit beta' (1407 aa).

4 residues coordinate Zn(2+): cysteine 70, cysteine 72, cysteine 85, and cysteine 88. 3 residues coordinate Mg(2+): aspartate 460, aspartate 462, and aspartate 464. Residues cysteine 814, cysteine 888, cysteine 895, and cysteine 898 each contribute to the Zn(2+) site. Lysine 972 is subject to N6-acetyllysine.

The protein belongs to the RNA polymerase beta' chain family. The RNAP catalytic core consists of 2 alpha, 1 beta, 1 beta' and 1 omega subunit. When a sigma factor is associated with the core the holoenzyme is formed, which can initiate transcription. Requires Mg(2+) as cofactor. The cofactor is Zn(2+).

The catalysed reaction is RNA(n) + a ribonucleoside 5'-triphosphate = RNA(n+1) + diphosphate. Its function is as follows. DNA-dependent RNA polymerase catalyzes the transcription of DNA into RNA using the four ribonucleoside triphosphates as substrates. The chain is DNA-directed RNA polymerase subunit beta' from Escherichia coli (strain SMS-3-5 / SECEC).